We begin with the raw amino-acid sequence, 94 residues long: Acylphosphatase (94 aa).

The 87-residue stretch at 6-92 (RVHVWIRGRV…EGLPTFEIRP (87 aa)) folds into the Acylphosphatase-like domain. Residues Arg21 and Asn39 contribute to the active site.

It belongs to the acylphosphatase family.

The catalysed reaction is an acyl phosphate + H2O = a carboxylate + phosphate + H(+). The polypeptide is Acylphosphatase (acyP) (Synechococcus sp. (strain JA-2-3B'a(2-13)) (Cyanobacteria bacterium Yellowstone B-Prime)).